We begin with the raw amino-acid sequence, 1456 residues long: Alpha-2-macroglobulin-like protein 1 (1456 aa).

An N-terminal signal peptide occupies residues 1 to 19; it reads MVPTILLSALLLHFTDVVA. N-linked (GlcNAc...) asparagine glycans are attached at residues asparagine 48, asparagine 172, and asparagine 868.

The protein belongs to the protease inhibitor I39 (alpha-2-macroglobulin) family. In terms of assembly, homotetramer; consists of two dimer pairs that are disulfide-linked. Part of a complex composed of complement component C3, CLCA1/CLCA3, A2ML1/OH and ALB/serum albumin.

It is found in the secreted. Its function is as follows. Inhibits protease gelatinolytic complex activity against type 1 collagen. This is Alpha-2-macroglobulin-like protein 1 from Mus musculus (Mouse).